A 659-amino-acid polypeptide reads, in one-letter code: Protein real-time (659 aa).

Residues 3–175 enclose the PRELI/MSF1 domain; that stretch reads QKFQSPVRVY…FIGQLREEGI (173 aa). The CRAL-TRIO domain occupies 286–462; the sequence is KPAVVVEHFP…FLGGPCKTMI (177 aa). Ser477 carries the post-translational modification Phosphoserine. In terms of domain architecture, GOLD spans 512–631; the sequence is HRNLYKSVDL…QLNVFYEVLS (120 aa).

As to expression, restricted to the developing gut and central nervous system (CNS).

Its subcellular location is the mitochondrion. The protein is Protein real-time (retm) of Drosophila melanogaster (Fruit fly).